We begin with the raw amino-acid sequence, 168 residues long: Transcriptional repressor NrdR (168 aa).

A zinc finger spans residues 3–34 (CPYCGFAQDRVVDSRESKEADSIRRRRECERC). Residues 49-139 (YMVVKKDGRR…VYRDFKDVNE (91 aa)) enclose the ATP-cone domain.

Belongs to the NrdR family. The cofactor is Zn(2+).

Its function is as follows. Negatively regulates transcription of bacterial ribonucleotide reductase nrd genes and operons by binding to NrdR-boxes. This is Transcriptional repressor NrdR from Acidobacterium capsulatum (strain ATCC 51196 / DSM 11244 / BCRC 80197 / JCM 7670 / NBRC 15755 / NCIMB 13165 / 161).